The primary structure comprises 133 residues: Protein PsiE homolog (133 aa).

4 helical membrane passes run 13–33, 55–75, 81–101, and 105–125; these read LQWILNIALIILSIVLSIFLI, VESIIVYFLYFEFIALIIKYF, FPLRYFIYIGITALIRLIIVS, and PMETLLYAGAILILVIALYIS.

It belongs to the PsiE family.

The protein resides in the cell membrane. This Bacillus cereus (strain ATCC 10987 / NRS 248) protein is Protein PsiE homolog.